The sequence spans 436 residues: ATP-dependent 6-phosphofructokinase (436 aa).

ATP is bound by residues Gly90, 155–156, and 180–183; these read RG and GDGT. Asp181 lines the Mg(2+) pocket. Residues 209–211, 254–256, Glu307, and 362–365 contribute to the substrate site; these read TID, MGR, and YMIR. Asp211 (proton acceptor) is an active-site residue.

It belongs to the phosphofructokinase type A (PFKA) family. PPi-dependent PFK group II subfamily. Atypical ATP-dependent clade 'X' sub-subfamily. Homodimer. Aggregates to a homotetramer after activation by ATP. It depends on Mg(2+) as a cofactor.

It localises to the cytoplasm. It carries out the reaction beta-D-fructose 6-phosphate + ATP = beta-D-fructose 1,6-bisphosphate + ADP + H(+). It functions in the pathway carbohydrate degradation; glycolysis; D-glyceraldehyde 3-phosphate and glycerone phosphate from D-glucose: step 3/4. Activated by nucleoside triphosphates. Inhibited by phosphoenolpyruvate. EDTA and biphosphonates play the role of inhibitors of kinase activity. Catalyzes the phosphorylation of D-fructose 6-phosphate to fructose 1,6-bisphosphate by ATP, the first committing step of glycolysis. In Entamoeba histolytica (strain ATCC 30459 / HM-1:IMSS / ABRM), this protein is ATP-dependent 6-phosphofructokinase (PPi-PFK).